The sequence spans 269 residues: 4-hydroxy-tetrahydrodipicolinate reductase (269 aa).

Residues 8–13 (GAAGRM) and glutamate 34 each bind NAD(+). An NADP(+)-binding site is contributed by arginine 35. NAD(+) contacts are provided by residues 98–100 (GTT) and 122–125 (APNY). Histidine 155 serves as the catalytic Proton donor/acceptor. Histidine 156 contributes to the (S)-2,3,4,5-tetrahydrodipicolinate binding site. Catalysis depends on lysine 159, which acts as the Proton donor. 165-166 (GT) contributes to the (S)-2,3,4,5-tetrahydrodipicolinate binding site.

It belongs to the DapB family.

The protein resides in the cytoplasm. The catalysed reaction is (S)-2,3,4,5-tetrahydrodipicolinate + NAD(+) + H2O = (2S,4S)-4-hydroxy-2,3,4,5-tetrahydrodipicolinate + NADH + H(+). The enzyme catalyses (S)-2,3,4,5-tetrahydrodipicolinate + NADP(+) + H2O = (2S,4S)-4-hydroxy-2,3,4,5-tetrahydrodipicolinate + NADPH + H(+). The protein operates within amino-acid biosynthesis; L-lysine biosynthesis via DAP pathway; (S)-tetrahydrodipicolinate from L-aspartate: step 4/4. Its function is as follows. Catalyzes the conversion of 4-hydroxy-tetrahydrodipicolinate (HTPA) to tetrahydrodipicolinate. In Vibrio atlanticus (strain LGP32) (Vibrio splendidus (strain Mel32)), this protein is 4-hydroxy-tetrahydrodipicolinate reductase.